The chain runs to 446 residues: Homocitrate synthase, mitochondrial (446 aa).

Residues 1 to 14 (MCATDNAPAANAAP) are compositionally biased toward low complexity. The interval 1–36 (MCATDNAPAANAAPEKPSNVGVEVGHTGEQTNPYGA) is disordered. The region spanning 48 to 307 (FQLIESTLRE…HKLRDLENLV (260 aa)) is the Pyruvate carboxyltransferase domain. Arginine 56 provides a ligand contact to 2-oxoglutarate. Glutamate 57 contacts Mg(2+). 2-oxoglutarate is bound by residues histidine 116, arginine 176, and threonine 210. Histidine 237 and histidine 239 together coordinate Mg(2+). The active-site Proton acceptor is the histidine 334. The tract at residues 422–446 (TPTVAATEGPAVEDEPAAKKAKTEE) is disordered. A compositionally biased stretch (basic and acidic residues) spans 437–446 (PAAKKAKTEE).

The protein belongs to the alpha-IPM synthase/homocitrate synthase family. Homocitrate synthase LYS20/LYS21 subfamily. Requires Mg(2+) as cofactor. Mn(2+) is required as a cofactor.

It is found in the mitochondrion. It carries out the reaction acetyl-CoA + 2-oxoglutarate + H2O = (2R)-homocitrate + CoA + H(+). It participates in amino-acid biosynthesis; L-lysine biosynthesis via AAA pathway; L-alpha-aminoadipate from 2-oxoglutarate: step 1/5. Catalyzes the aldol-type condensation of 2-oxoglutarate with acetyl-CoA to yield homocitrate. Carries out the first step of the alpha-aminoadipate (AAA) lysine biosynthesis pathway. This chain is Homocitrate synthase, mitochondrial (LYS1), found in Yarrowia lipolytica (strain CLIB 122 / E 150) (Yeast).